We begin with the raw amino-acid sequence, 325 residues long: Palmitoyltransferase PFA3 (325 aa).

Topologically, residues 1 to 5 are cytoplasmic; the sequence is MLLDR. The helical transmembrane segment at 6–26 threads the bilayer; that stretch reads IGFYFPKALSNFLILYTCCIC. Residues 27-35 are Lumenal-facing; it reads FSRIDILPR. The chain crosses the membrane as a helical span at residues 36–56; sequence IVNVVLLITLSSFALYTYWKI. Over 57–146 the chain is Cytoplasmic; it reads IRVGAGSPLE…ASCVGFRNQK (90 aa). The DHHC domain maps to 103–153; sequence RFCQTCEIWKPDRCHHCSKCNKCFLKMDHHCPWFASCVGFRNQKFFVQFLA. Residues 147–167 form a helical membrane-spanning segment; it reads FFVQFLAYTTVYSLYVLLMTS. Residues 168-185 are Lumenal-facing; that stretch reads AQLYSWFRQMKYKSELLD. A helical membrane pass occupies residues 186–206; that stretch reads LHLLVVWVLSVIAAIATFAFT. Topologically, residues 207–325 are cytoplasmic; the sequence is TYTIWLVTKN…LTLRPSIEHI (119 aa).

It belongs to the DHHC palmitoyltransferase family. PFA3 subfamily. Autopalmitoylated.

It is found in the vacuole membrane. The catalysed reaction is L-cysteinyl-[protein] + hexadecanoyl-CoA = S-hexadecanoyl-L-cysteinyl-[protein] + CoA. Its function is as follows. Palmitoyltransferase specific for VAC8. Palmitoylates VAC8 at one or more of its N-terminal cysteine residues, which is required for its proper membrane localization. In Kluyveromyces lactis (strain ATCC 8585 / CBS 2359 / DSM 70799 / NBRC 1267 / NRRL Y-1140 / WM37) (Yeast), this protein is Palmitoyltransferase PFA3 (PFA3).